The following is a 544-amino-acid chain: Chaperonin GroEL (544 aa).

ATP contacts are provided by residues 30 to 33, Lys51, 87 to 91, Gly415, 479 to 481, and Asp495; these read TLGP, DGTTT, and NAA.

This sequence belongs to the chaperonin (HSP60) family. Forms a cylinder of 14 subunits composed of two heptameric rings stacked back-to-back. Interacts with the co-chaperonin GroES.

It is found in the cytoplasm. It carries out the reaction ATP + H2O + a folded polypeptide = ADP + phosphate + an unfolded polypeptide.. Its function is as follows. Together with its co-chaperonin GroES, plays an essential role in assisting protein folding. The GroEL-GroES system forms a nano-cage that allows encapsulation of the non-native substrate proteins and provides a physical environment optimized to promote and accelerate protein folding. This Acinetobacter baumannii (strain AB307-0294) protein is Chaperonin GroEL.